Reading from the N-terminus, the 588-residue chain is MDDEETSEINSVQGQDEDVQLEVQPQAQGPQDRQVDAIEQAWNNATQDEQSPPAEEAFQDPLAIDGEGGNAPEAMVEDVLQDDTASEGSHPSSDMSLETPGSEDDSDLELLPRWMIPQNRLRSAVDMMVSQARNRDGGIAALLNRDNFLQRVRSIVFSQERRRSRTSEETSQEAADAEQPNDPPPQQPPRPPIDIGFDTNLPAEHSYFGNHLSRVPGVDYLEVGSVHHMLIFLHQHILFPGEVLPFMIDGRMFDEDMPGLDGLIFGVGFPLMQPPEDNPLKLYGVTCQIYERGESGRGLVFYKSRALQRIVINCEDIQGSPQYIARNPTSKCFSKVKILPEYFLPEPLQSVEMGSMARFRDIPSMRDKYRRFQLSTTTWPSDACQEYSFASIVERARQRLESQKIDTMPKCPIQLSFWLVRNLHLTEKMMRLTFLTDSVNTRLQLIKSTFKDESLFFCRYCNSSLAHCADLFAMSKHGVQTQYCNPDGYIHETNTVYRVMSHAIGYSGEPSTKFSWFPGYQWHIILCKFCAQHVGWEFKAVQPNLTPRVFFGLAGSSVRIGKASENTPFNGSTYVVRNMLRLISNEME.

Disordered stretches follow at residues 1–107 (MDDE…DDSD) and 159–197 (QERRRSRTSEETSQEAADAEQPNDPPPQQPPRPPIDIGF). Over residues 41-50 (AWNNATQDEQ) the composition is skewed to polar residues. The segment covering 75-85 (MVEDVLQDDTA) has biased composition (acidic residues). Residues 86-96 (SEGSHPSSDMS) show a composition bias toward polar residues. Positions 159–168 (QERRRSRTSE) are enriched in basic and acidic residues. The span at 181-192 (NDPPPQQPPRPP) shows a compositional bias: pro residues. The Lon N-terminal domain maps to 228–454 (HMLIFLHQHI…LIKSTFKDES (227 aa)). In terms of domain architecture, CULT spans 453–562 (ESLFFCRYCN…LAGSSVRIGK (110 aa)). Zn(2+)-binding residues include C458, C461, C527, and C530.

The protein belongs to the CRBN family. In terms of assembly, likely a component of a DCX (DDB1-CUL4-X-box) protein ligase complex. May interact with pic/DDB1. Ubiquitinated.

Its subcellular location is the nucleus. It participates in protein modification; protein ubiquitination. In terms of biological role, substrate recognition component of a DCX (DDB1-CUL4-X-box) E3 protein ligase complex that mediates the ubiquitination and subsequent proteasomal degradation of target proteins. Has an essential role in mediating growth by negatively regulating insulin signaling. It also has a role in maintaining presynaptic function in the neuromuscular junction synapses of third-instar larvae. In Drosophila yakuba (Fruit fly), this protein is Protein cereblon.